The chain runs to 123 residues: UPF0738 protein BCE33L1094 (123 aa).

This sequence belongs to the UPF0738 family.

This chain is UPF0738 protein BCE33L1094, found in Bacillus cereus (strain ZK / E33L).